The following is a 170-amino-acid chain: Small ribosomal subunit protein uS5 (170 aa).

The S5 DRBM domain maps to 13–76; that stretch reads LTEKLIGVNR…DQARRSMVKI (64 aa).

The protein belongs to the universal ribosomal protein uS5 family. Part of the 30S ribosomal subunit. Contacts proteins S4 and S8.

Its function is as follows. With S4 and S12 plays an important role in translational accuracy. Functionally, located at the back of the 30S subunit body where it stabilizes the conformation of the head with respect to the body. This Laribacter hongkongensis (strain HLHK9) protein is Small ribosomal subunit protein uS5.